A 194-amino-acid chain; its full sequence is Small ribosomal subunit protein eS7 (194 aa).

The protein belongs to the eukaryotic ribosomal protein eS7 family.

The polypeptide is Small ribosomal subunit protein eS7 (RpS7) (Drosophila melanogaster (Fruit fly)).